Reading from the N-terminus, the 179-residue chain is ATP-dependent protease subunit HslV (179 aa).

Residue threonine 5 is part of the active site. Na(+)-binding residues include glycine 164, cysteine 167, and threonine 170.

The protein belongs to the peptidase T1B family. HslV subfamily. In terms of assembly, a double ring-shaped homohexamer of HslV is capped on each side by a ring-shaped HslU homohexamer. The assembly of the HslU/HslV complex is dependent on binding of ATP.

It is found in the cytoplasm. The catalysed reaction is ATP-dependent cleavage of peptide bonds with broad specificity.. Allosterically activated by HslU binding. In terms of biological role, protease subunit of a proteasome-like degradation complex believed to be a general protein degrading machinery. The chain is ATP-dependent protease subunit HslV from Verminephrobacter eiseniae (strain EF01-2).